The primary structure comprises 195 residues: Imidazoleglycerol-phosphate dehydratase (195 aa).

Belongs to the imidazoleglycerol-phosphate dehydratase family.

It localises to the cytoplasm. It carries out the reaction D-erythro-1-(imidazol-4-yl)glycerol 3-phosphate = 3-(imidazol-4-yl)-2-oxopropyl phosphate + H2O. It participates in amino-acid biosynthesis; L-histidine biosynthesis; L-histidine from 5-phospho-alpha-D-ribose 1-diphosphate: step 6/9. This Cereibacter sphaeroides (strain ATCC 17029 / ATH 2.4.9) (Rhodobacter sphaeroides) protein is Imidazoleglycerol-phosphate dehydratase.